The sequence spans 196 residues: Large ribosomal subunit protein uL10 (196 aa).

A disordered region spans residues 167 to 196 (EKKAAEGPAEAPQPATEPPAEAPEAPADAE).

The protein belongs to the universal ribosomal protein uL10 family. In terms of assembly, part of the ribosomal stalk of the 50S ribosomal subunit. The N-terminus interacts with L11 and the large rRNA to form the base of the stalk. The C-terminus forms an elongated spine to which L12 dimers bind in a sequential fashion forming a multimeric L10(L12)X complex.

Forms part of the ribosomal stalk, playing a central role in the interaction of the ribosome with GTP-bound translation factors. This chain is Large ribosomal subunit protein uL10, found in Mycolicibacterium paratuberculosis (strain ATCC BAA-968 / K-10) (Mycobacterium paratuberculosis).